Here is a 222-residue protein sequence, read N- to C-terminus: Voltage-dependent calcium channel gamma-1 subunit (222 aa).

Over 1-10 (MSPTEAPKVR) the chain is Cytoplasmic. Residues 11–29 (VTLFCILVGIVLAMTAVVS) traverse the membrane as a helical segment. The Extracellular segment spans residues 30 to 108 (DHWAVLSPHM…TQKEYSISAA (79 aa)). 2 N-linked (GlcNAc...) asparagine glycosylation sites follow: asparagine 43 and asparagine 79. A disulfide bridge connects residues cysteine 57 and cysteine 80. A helical transmembrane segment spans residues 109–129 (AISVFSLGFLIMGTICALMAF). Residues 130 to 134 (RKKRD) are Cytoplasmic-facing. Residues 135–155 (YLLRPASMFYVFAGLCLFVSL) form a helical membrane-spanning segment. Residues 156-179 (EVMRQSVKRMIDSEDTVWIEYYYS) are Extracellular-facing. Residues 180–204 (WSFACACAAFVLLFLGGISLLLFSL) form a helical membrane-spanning segment. At 205–222 (PRMPQNPWESCMDAEPEH) the chain is on the cytoplasmic side.

The protein belongs to the PMP-22/EMP/MP20 family. CACNG subfamily. In terms of assembly, component of a calcium channel complex consisting of a pore-forming alpha subunit (CACNA1S) and the ancillary subunits CACNB1 or CACNB2, CACNG1 and CACNA2D1. The channel complex contains alpha, beta, gamma and delta subunits in a 1:1:1:1 ratio, i.e. it contains either CACNB1 or CACNB2. N-glycosylated. In terms of tissue distribution, skeletal muscle (at protein level).

It is found in the cell membrane. Its subcellular location is the sarcolemma. Regulatory subunit of the voltage-gated calcium channel that gives rise to L-type calcium currents in skeletal muscle. Regulates channel inactivation kinetics. The polypeptide is Voltage-dependent calcium channel gamma-1 subunit (CACNG1) (Oryctolagus cuniculus (Rabbit)).